We begin with the raw amino-acid sequence, 295 residues long: MKKPAYIGRFAPTPSGYLHFGSLVAALASYLDARAVGGQWLLRMEDLDPPREVAGAQVAILETLERYGFEWDGEMVRQSERHDAYADILQRWFNHGLAYACTCSRKQLEAFEGVYPGFCRDAGHAAENAAIRIRVPELEYRFEDRVQGTFHMHLGRESGDFVIRRRDGLYAYQLAVVIDDAWQGVTDIVRGADLLDSTPRHLYLQELLGLPQPRYLHVPLITQPDGHKLGKSYRSPPLPADQATPLLLRALRALGQPVDAHMADGTAQEVLAWGIRHWNASLIPRQRTIEEARIA.

Residues 9-13 (RFAPT) and E45 each bind L-glutamate. Residues 12-22 (PTPSGYLHFGS) carry the 'HIGH' region motif. Residues C101, C103, Y115, and C119 each contribute to the Zn(2+) site. L-glutamate-binding residues include Y172 and R190. The 'KMSKS' region motif lies at 228–232 (KLGKS). K231 serves as a coordination point for ATP.

Belongs to the class-I aminoacyl-tRNA synthetase family. GluQ subfamily. The cofactor is Zn(2+).

Its function is as follows. Catalyzes the tRNA-independent activation of glutamate in presence of ATP and the subsequent transfer of glutamate onto a tRNA(Asp). Glutamate is transferred on the 2-amino-5-(4,5-dihydroxy-2-cyclopenten-1-yl) moiety of the queuosine in the wobble position of the QUC anticodon. This Pseudomonas syringae pv. tomato (strain ATCC BAA-871 / DC3000) protein is Glutamyl-Q tRNA(Asp) synthetase.